Here is a 209-residue protein sequence, read N- to C-terminus: Kynurenine formamidase (209 aa).

Phe19 lines the substrate pocket. Positions 49, 53, and 55 each coordinate Zn(2+). His59 serves as the catalytic Proton donor/acceptor. Zn(2+)-binding residues include His160 and Glu172.

The protein belongs to the Cyclase 1 superfamily. KynB family. In terms of assembly, homodimer. The cofactor is Zn(2+).

The enzyme catalyses N-formyl-L-kynurenine + H2O = L-kynurenine + formate + H(+). The protein operates within amino-acid degradation; L-tryptophan degradation via kynurenine pathway; L-kynurenine from L-tryptophan: step 2/2. In terms of biological role, catalyzes the hydrolysis of N-formyl-L-kynurenine to L-kynurenine, the second step in the kynurenine pathway of tryptophan degradation. In Delftia acidovorans (strain DSM 14801 / SPH-1), this protein is Kynurenine formamidase.